The chain runs to 234 residues: Urease accessory protein UreF (234 aa).

It belongs to the UreF family. As to quaternary structure, ureD, UreF and UreG form a complex that acts as a GTP-hydrolysis-dependent molecular chaperone, activating the urease apoprotein by helping to assemble the nickel containing metallocenter of UreC. The UreE protein probably delivers the nickel.

It is found in the cytoplasm. Required for maturation of urease via the functional incorporation of the urease nickel metallocenter. The protein is Urease accessory protein UreF of Azoarcus sp. (strain BH72).